The following is a 50-amino-acid chain: Parvalbumin (50 aa).

The EF-hand domain occupies 38–50; the sequence is KTHEQVKKVFNIL.

Belongs to the parvalbumin family.

Probably regulates the activity of the caudal neurosecretory system. Binds two calcium ions. The sequence is that of Parvalbumin from Scyliorhinus canicula (Small-spotted catshark).